The chain runs to 337 residues: Lipoyl synthase (337 aa).

The [4Fe-4S] cluster site is built by cysteine 81, cysteine 86, cysteine 92, cysteine 107, cysteine 111, cysteine 114, and serine 323. Residues 93–312 (FSHGTATFMI…EEYGNALGFS (220 aa)) enclose the Radical SAM core domain.

It belongs to the radical SAM superfamily. Lipoyl synthase family. [4Fe-4S] cluster serves as cofactor.

It is found in the cytoplasm. The catalysed reaction is [[Fe-S] cluster scaffold protein carrying a second [4Fe-4S](2+) cluster] + N(6)-octanoyl-L-lysyl-[protein] + 2 oxidized [2Fe-2S]-[ferredoxin] + 2 S-adenosyl-L-methionine + 4 H(+) = [[Fe-S] cluster scaffold protein] + N(6)-[(R)-dihydrolipoyl]-L-lysyl-[protein] + 4 Fe(3+) + 2 hydrogen sulfide + 2 5'-deoxyadenosine + 2 L-methionine + 2 reduced [2Fe-2S]-[ferredoxin]. The protein operates within protein modification; protein lipoylation via endogenous pathway; protein N(6)-(lipoyl)lysine from octanoyl-[acyl-carrier-protein]: step 2/2. Its function is as follows. Catalyzes the radical-mediated insertion of two sulfur atoms into the C-6 and C-8 positions of the octanoyl moiety bound to the lipoyl domains of lipoate-dependent enzymes, thereby converting the octanoylated domains into lipoylated derivatives. In Xanthomonas oryzae pv. oryzae (strain MAFF 311018), this protein is Lipoyl synthase.